Reading from the N-terminus, the 73-residue chain is Putative antitoxin VapB9 (73 aa).

Its function is as follows. Antitoxin component of a possible type II toxin-antitoxin (TA) system. The cognate toxin is VapC9. This is Putative antitoxin VapB9 (vapB9) from Mycobacterium tuberculosis (strain CDC 1551 / Oshkosh).